Here is a 130-residue protein sequence, read N- to C-terminus: Small ribosomal subunit protein bS16 (130 aa).

The span at 98-109 (AAAKQAAKDAAE) shows a compositional bias: basic and acidic residues. Residues 98–130 (AAAKQAAKDAAEAKAAAAAEAEAPAADAEASEG) form a disordered region. Residues 110–130 (AKAAAAAEAEAPAADAEASEG) are compositionally biased toward low complexity.

Belongs to the bacterial ribosomal protein bS16 family.

The polypeptide is Small ribosomal subunit protein bS16 (Synechococcus sp. (strain CC9902)).